The following is a 312-amino-acid chain: Malate dehydrogenase (312 aa).

NAD(+) is bound by residues 7–13 (GAAGGIG) and Asp-34. 2 residues coordinate substrate: Arg-81 and Arg-87. Residues Asn-94 and 117-119 (ITN) each bind NAD(+). Residues Asn-119 and Arg-153 each contribute to the substrate site. The Proton acceptor role is filled by His-177. Residue Met-227 participates in NAD(+) binding.

The protein belongs to the LDH/MDH superfamily. MDH type 1 family. As to quaternary structure, homodimer.

The catalysed reaction is (S)-malate + NAD(+) = oxaloacetate + NADH + H(+). Catalyzes the reversible oxidation of malate to oxaloacetate. This chain is Malate dehydrogenase, found in Salmonella agona (strain SL483).